Here is a 455-residue protein sequence, read N- to C-terminus: Probable pectate lyase 6 (455 aa).

The signal sequence occupies residues 1 to 25 (MVNLGSYVFVFVALSLTVVVPSVQA). Asn-55 and Asn-75 each carry an N-linked (GlcNAc...) asparagine glycan. The Ca(2+) site is built by Asp-247, Asp-271, and Asp-275. The active site involves Arg-327.

Belongs to the polysaccharide lyase 1 family. Ca(2+) is required as a cofactor.

It carries out the reaction Eliminative cleavage of (1-&gt;4)-alpha-D-galacturonan to give oligosaccharides with 4-deoxy-alpha-D-galact-4-enuronosyl groups at their non-reducing ends.. It functions in the pathway glycan metabolism; pectin degradation; 2-dehydro-3-deoxy-D-gluconate from pectin: step 2/5. This is Probable pectate lyase 6 from Arabidopsis thaliana (Mouse-ear cress).